The following is a 121-amino-acid chain: UPF0212 protein VNG_0879C (121 aa).

Belongs to the UPF0212 family.

The sequence is that of UPF0212 protein VNG_0879C from Halobacterium salinarum (strain ATCC 700922 / JCM 11081 / NRC-1) (Halobacterium halobium).